The chain runs to 937 residues: MATAAESGARTWPGSGSPRLGSPAGSPVLGISGRARPGSGPERTGRAIGSVAPGHSFRKVTLTKPTFCHLCSDFIWGLAGFLCDVCNFMSHEKCLKQVKTPCTSIAPSLVRVPVAHCFGSLGLYKRKFCVVCRKSLEVPAFRCEVCELHVHPDCVPFACSDCRQCHQDGQHDYDTYHHHWREGNLPSGARCEVCRKTCGSSDVLAGVRCEWCGVQAHSVCSTALTPECTFGRLRSMVLPPSCVRLLSRNFSKMHCFRIPETMVLELGDGDDGLDGSAAVGTGREVSAATESTKQTLKIFDGNDSMRKNQFRLVTVSRLARNEEVMEAALRAYYINEDPKDFQLQALPLTLLSGNAQALGKAGTTEEETSKDSGPGDSVPEAWVIRSLPRTQEILKIYPDWLKVGVAYVSIRVNSQSTARSVVQEVLPLFGRQVEDQERFQLIEVLMSSRQVQRTVLVDEEPLLDRLRDIRQTSVRQASQTRFYVAEARAVTPHVSLFVGGLPPGLSPQDYSNLLHEAMATKAAVVSVSHVYSLQGAVVLDVTCFAEAERLYMLARDTAVHGRPLTALVLPDVLHTKLPPDCCPLLVFVNPKSGGLKGRELLCSFRKLLNPHQVFELTNGGPLPGFHLFSQVPCFRVLVCGGDGTVGWVLAALEETRRHLACPEPSVAILPLGTGNDLGRVLRWGAGYSGEDPFSVLVSVDEADAVLMDRWTILLDAHEIDSTENNVVETEPPKIVQMNNYCGIGIDAELSLDFHQAREEEPGKFTSRFHNKGVYVRVGLQKISHSRSLHKEIRLQVEQQEVELPSIEGLIFINIPSWGSGADLWGSDSDSRFEKPRIDDGLLEVVGVTGVVHMGQVQGGLRSGIRIAQGSYFRVTLLKATPVQVDGEPWIQAPGHMIISATAPKVHMLRKAKQKPRKAGAIRDTRVDTLPAPEGNPL.

Residues 1-48 (MATAAESGARTWPGSGSPRLGSPAGSPVLGISGRARPGSGPERTGRAI) are disordered. A phosphoserine mark is found at S22 and S26. Phorbol-ester/DAG-type zinc fingers lie at residues 54 to 102 (GHSF…KTPC), 115 to 162 (AHCF…CSDC), and 177 to 228 (HHHW…TPEC). Residues 359–378 (GKAGTTEEETSKDSGPGDSV) are disordered. A Ras-associating domain is found at 390 to 489 (TQEILKIYPD…TRFYVAEARA (100 aa)). 2 short sequence motifs (LXXLL motif) span residues 550-554 (LYMLA) and 569-573 (LPDVL). Residues 579 to 716 (PDCCPLLVFV…MDRWTILLDA (138 aa)) enclose the DAGKc domain. Positions 911 to 937 (AKQKPRKAGAIRDTRVDTLPAPEGNPL) are disordered.

Belongs to the eukaryotic diacylglycerol kinase family. Interacts with RHOA (constitutively activated, GTP-bound); the interaction inhibits DGKQ. Interacts with PRKCE. Interacts with PRKCH. Interacts with PLCB1. Interacts with NR5A1; the interaction requires both LXXLL motifs in DGKQ and is required for full phosphatidic acid-mediated activation of NR5A1. Phosphorylated by PRKCE and PRKCH in vitro. In terms of tissue distribution, widely expressed with higher expression in the brain and, to a lesser extent, in the small intestine, duodenum, and liver. In brain, expressed in gray matter. Expression is most intense in the cerebellar cortex and hippocampus, while moderate expression is seen in the olfactory bulb neuronal layers and brain stem nuclei. In the cerebellar cortex, equally expressed in both the Purkinje cell somata and the granule cells.

It localises to the cytoplasm. The protein localises to the cytosol. The protein resides in the cell membrane. It is found in the synapse. Its subcellular location is the cytoskeleton. It localises to the nucleus. The protein localises to the nucleus speckle. The protein resides in the nucleus matrix. It catalyses the reaction a 1,2-diacyl-sn-glycerol + ATP = a 1,2-diacyl-sn-glycero-3-phosphate + ADP + H(+). The enzyme catalyses a 1-O-alkyl-sn-glycerol + ATP = a 1-O-alkyl-sn-glycero-3-phosphate + ADP + H(+). The catalysed reaction is 1-O-alkyl-2-acyl-sn-glycerol + ATP = 1-O-alkyl-2-acyl-sn-glycero-3-phosphate + ADP + H(+). It carries out the reaction 1,2-di-(9Z-octadecenoyl)-sn-glycerol + ATP = 1,2-di-(9Z-octadecenoyl)-sn-glycero-3-phosphate + ADP + H(+). It catalyses the reaction 1-O-hexadecyl-sn-glycerol + ATP = 1-O-hexadecyl-sn-glycero-3-phosphate + ADP + H(+). The enzyme catalyses 1-O-hexadecyl-2-acetyl-sn-glycerol + ATP = 1-O-hexadecyl-2-acetyl-sn-glycero-3-phosphate + ADP + H(+). The catalysed reaction is 1-octadecanoyl-2-(5Z,8Z,11Z,14Z-eicosatetraenoyl)-sn-glycerol + ATP = 1-octadecanoyl-2-(5Z,8Z,11Z,14Z-eicosatetraenoyl)-sn-glycero-3-phosphate + ADP + H(+). It functions in the pathway lipid metabolism; glycerolipid metabolism. Activated by phosphatidylserine. Its function is as follows. Diacylglycerol kinase that converts diacylglycerol/DAG into phosphatidic acid/phosphatidate/PA and regulates the respective levels of these two bioactive lipids. Thereby, acts as a central switch between the signaling pathways activated by these second messengers with different cellular targets and opposite effects in numerous biological processes. Within the adrenocorticotropic hormone signaling pathway, produces phosphatidic acid which in turn activates NR5A1 and subsequent steroidogenic gene transcription. Also functions downstream of the nerve growth factor signaling pathway being specifically activated in the nucleus by the growth factor. Through its diacylglycerol activity also regulates synaptic vesicle endocytosis. The polypeptide is Diacylglycerol kinase theta (Rattus norvegicus (Rat)).